The following is a 129-amino-acid chain: Modulator protein MzrA (129 aa).

The Cytoplasmic portion of the chain corresponds to 1–14 (MINFRGRFGRPLWH). The chain crosses the membrane as a helical span at residues 15–35 (YLVLPVVLLLLAVILLTPMIV). Topologically, residues 36 to 129 (QTESTLKIRP…VFRSNQQNLG (94 aa)) are periplasmic.

Belongs to the MzrA family. As to quaternary structure, interacts with EnvZ.

It localises to the cell inner membrane. Its function is as follows. Modulates the activity of the EnvZ/OmpR two-component regulatory system, probably by directly modulating EnvZ enzymatic activity and increasing stability of phosphorylated OmpR. The protein is Modulator protein MzrA of Yersinia pestis (strain Pestoides F).